We begin with the raw amino-acid sequence, 312 residues long: Tetraacyldisaccharide 4'-kinase (312 aa).

Residue isoleucine 60–threonine 67 coordinates ATP.

The protein belongs to the LpxK family.

The catalysed reaction is a lipid A disaccharide + ATP = a lipid IVA + ADP + H(+). It participates in glycolipid biosynthesis; lipid IV(A) biosynthesis; lipid IV(A) from (3R)-3-hydroxytetradecanoyl-[acyl-carrier-protein] and UDP-N-acetyl-alpha-D-glucosamine: step 6/6. Functionally, transfers the gamma-phosphate of ATP to the 4'-position of a tetraacyldisaccharide 1-phosphate intermediate (termed DS-1-P) to form tetraacyldisaccharide 1,4'-bis-phosphate (lipid IVA). This chain is Tetraacyldisaccharide 4'-kinase, found in Helicobacter pylori (strain HPAG1).